The following is a 337-amino-acid chain: 4-hydroxythreonine-4-phosphate dehydrogenase (337 aa).

His-139 and Thr-140 together coordinate substrate. Positions 173, 218, and 273 each coordinate a divalent metal cation. Positions 281, 290, and 299 each coordinate substrate.

The protein belongs to the PdxA family. As to quaternary structure, homodimer. It depends on Zn(2+) as a cofactor. The cofactor is Mg(2+). Requires Co(2+) as cofactor.

It localises to the cytoplasm. It carries out the reaction 4-(phosphooxy)-L-threonine + NAD(+) = 3-amino-2-oxopropyl phosphate + CO2 + NADH. The protein operates within cofactor biosynthesis; pyridoxine 5'-phosphate biosynthesis; pyridoxine 5'-phosphate from D-erythrose 4-phosphate: step 4/5. Functionally, catalyzes the NAD(P)-dependent oxidation of 4-(phosphooxy)-L-threonine (HTP) into 2-amino-3-oxo-4-(phosphooxy)butyric acid which spontaneously decarboxylates to form 3-amino-2-oxopropyl phosphate (AHAP). This Rhodopseudomonas palustris (strain ATCC BAA-98 / CGA009) protein is 4-hydroxythreonine-4-phosphate dehydrogenase.